The following is a 229-amino-acid chain: Putative N-acetylmannosamine-6-phosphate 2-epimerase (229 aa).

The protein belongs to the NanE family.

It catalyses the reaction an N-acyl-D-glucosamine 6-phosphate = an N-acyl-D-mannosamine 6-phosphate. The protein operates within amino-sugar metabolism; N-acetylneuraminate degradation; D-fructose 6-phosphate from N-acetylneuraminate: step 3/5. Functionally, converts N-acetylmannosamine-6-phosphate (ManNAc-6-P) to N-acetylglucosamine-6-phosphate (GlcNAc-6-P). The sequence is that of Putative N-acetylmannosamine-6-phosphate 2-epimerase from Salmonella arizonae (strain ATCC BAA-731 / CDC346-86 / RSK2980).